The following is an 89-amino-acid chain: Small ribosomal subunit protein uS15 (89 aa).

The protein belongs to the universal ribosomal protein uS15 family. As to quaternary structure, part of the 30S ribosomal subunit. Forms a bridge to the 50S subunit in the 70S ribosome, contacting the 23S rRNA.

One of the primary rRNA binding proteins, it binds directly to 16S rRNA where it helps nucleate assembly of the platform of the 30S subunit by binding and bridging several RNA helices of the 16S rRNA. Functionally, forms an intersubunit bridge (bridge B4) with the 23S rRNA of the 50S subunit in the ribosome. This Pseudomonas putida (Arthrobacter siderocapsulatus) protein is Small ribosomal subunit protein uS15.